Here is a 310-residue protein sequence, read N- to C-terminus: Porphobilinogen deaminase (310 aa).

An S-(dipyrrolylmethanemethyl)cysteine modification is found at Cys-243.

Belongs to the HMBS family. As to quaternary structure, monomer. Dipyrromethane is required as a cofactor.

It carries out the reaction 4 porphobilinogen + H2O = hydroxymethylbilane + 4 NH4(+). Its pathway is porphyrin-containing compound metabolism; protoporphyrin-IX biosynthesis; coproporphyrinogen-III from 5-aminolevulinate: step 2/4. Its function is as follows. Tetrapolymerization of the monopyrrole PBG into the hydroxymethylbilane pre-uroporphyrinogen in several discrete steps. This chain is Porphobilinogen deaminase, found in Mannheimia succiniciproducens (strain KCTC 0769BP / MBEL55E).